Here is a 301-residue protein sequence, read N- to C-terminus: N-acetylmuramic acid 6-phosphate etherase (301 aa).

Residues 57–220 (IAETFMKNGR…TTGAMIKTGK (164 aa)) form the SIS domain. The active-site Proton donor is the Glu-85. Residue Glu-116 is part of the active site.

The protein belongs to the GCKR-like family. MurNAc-6-P etherase subfamily. In terms of assembly, homodimer.

The catalysed reaction is N-acetyl-D-muramate 6-phosphate + H2O = N-acetyl-D-glucosamine 6-phosphate + (R)-lactate. It functions in the pathway amino-sugar metabolism; 1,6-anhydro-N-acetylmuramate degradation. It participates in amino-sugar metabolism; N-acetylmuramate degradation. The protein operates within cell wall biogenesis; peptidoglycan recycling. Functionally, specifically catalyzes the cleavage of the D-lactyl ether substituent of MurNAc 6-phosphate, producing GlcNAc 6-phosphate and D-lactate. Together with AnmK, is also required for the utilization of anhydro-N-acetylmuramic acid (anhMurNAc) either imported from the medium or derived from its own cell wall murein, and thus plays a role in cell wall recycling. The chain is N-acetylmuramic acid 6-phosphate etherase from Pasteurella multocida (strain Pm70).